A 33-amino-acid chain; its full sequence is AKKYKVRLLSEAEGIDVTIDSADDVYILDAAEE.

Positions 3-33 (KYKVRLLSEAEGIDVTIDSADDVYILDAAEE) constitute a 2Fe-2S ferredoxin-type domain.

This sequence belongs to the 2Fe2S plant-type ferredoxin family. The cofactor is [2Fe-2S] cluster.

The protein localises to the plastid. It localises to the chloroplast. Ferredoxins are iron-sulfur proteins that transfer electrons in a wide variety of metabolic reactions. In Porphyridium aerugineum (Red microalga), this protein is Ferredoxin.